A 392-amino-acid chain; its full sequence is Probable tRNA sulfurtransferase (392 aa).

In terms of domain architecture, THUMP spans 59 to 167 (ADITDRVKKV…DQAFVFSNKI (109 aa)). ATP is bound by residues 184–185 (LL), 209–210 (HF), Arg-266, Gly-288, and Gln-297.

This sequence belongs to the ThiI family.

The protein resides in the cytoplasm. It catalyses the reaction [ThiI sulfur-carrier protein]-S-sulfanyl-L-cysteine + a uridine in tRNA + 2 reduced [2Fe-2S]-[ferredoxin] + ATP + H(+) = [ThiI sulfur-carrier protein]-L-cysteine + a 4-thiouridine in tRNA + 2 oxidized [2Fe-2S]-[ferredoxin] + AMP + diphosphate. The enzyme catalyses [ThiS sulfur-carrier protein]-C-terminal Gly-Gly-AMP + S-sulfanyl-L-cysteinyl-[cysteine desulfurase] + AH2 = [ThiS sulfur-carrier protein]-C-terminal-Gly-aminoethanethioate + L-cysteinyl-[cysteine desulfurase] + A + AMP + 2 H(+). Its pathway is cofactor biosynthesis; thiamine diphosphate biosynthesis. Catalyzes the ATP-dependent transfer of a sulfur to tRNA to produce 4-thiouridine in position 8 of tRNAs, which functions as a near-UV photosensor. Also catalyzes the transfer of sulfur to the sulfur carrier protein ThiS, forming ThiS-thiocarboxylate. This is a step in the synthesis of thiazole, in the thiamine biosynthesis pathway. The sulfur is donated as persulfide by IscS. This chain is Probable tRNA sulfurtransferase, found in Alkaliphilus oremlandii (strain OhILAs) (Clostridium oremlandii (strain OhILAs)).